Consider the following 95-residue polypeptide: uncharacterized protein (95 aa).

The helical transmembrane segment at 12 to 32 threads the bilayer; the sequence is LASLIVSMVVLVVGLALWFFV. A disordered region spans residues 66 to 87; it reads ANEPEKEAEPATAASEPKEDED.

The protein localises to the cell membrane. This is an uncharacterized protein from Salmonella typhi.